The chain runs to 333 residues: Casein kinase II subunit alpha-3 (333 aa).

One can recognise a Protein kinase domain in the interval 34 to 319 (YEVVRKVGRG…AREAMDHPYF (286 aa)). ATP contacts are provided by residues 40-48 (VGRGKYSEV) and Lys-63. The active-site Proton acceptor is Asp-151.

It belongs to the protein kinase superfamily. Ser/Thr protein kinase family. CK2 subfamily. Heterotetramer of two catalytic alpha subunits and two regulatory beta subunits.

It is found in the nucleus. Its subcellular location is the nucleolus. The protein localises to the cytoplasm. The enzyme catalyses L-seryl-[protein] + ATP = O-phospho-L-seryl-[protein] + ADP + H(+). It carries out the reaction L-threonyl-[protein] + ATP = O-phospho-L-threonyl-[protein] + ADP + H(+). Casein kinases are operationally defined by their preferential utilization of acidic proteins such as caseins as substrates. The alpha chain contains the catalytic site. The tetrameric holoenzyme CK2 is composed of two alpha and two beta subunits. Acts as a circadian clock component that maintains the correct period length through phosphorylation of CCA1. The chain is Casein kinase II subunit alpha-3 from Arabidopsis thaliana (Mouse-ear cress).